Consider the following 282-residue polypeptide: Undecaprenyl-diphosphatase (282 aa).

The next 7 helical transmembrane spans lie at 39-59, 85-105, 115-135, 153-173, 196-216, 230-250, and 260-280; these read PGAA…LIYF, ATMG…GLLF, SLYW…LTEV, IGWK…IPGS, FSFL…LYET, LLVA…FLIT, and FIIY…TGAI.

This sequence belongs to the UppP family.

Its subcellular location is the cell inner membrane. The enzyme catalyses di-trans,octa-cis-undecaprenyl diphosphate + H2O = di-trans,octa-cis-undecaprenyl phosphate + phosphate + H(+). Its function is as follows. Catalyzes the dephosphorylation of undecaprenyl diphosphate (UPP). Confers resistance to bacitracin. The polypeptide is Undecaprenyl-diphosphatase (Chlorobium chlorochromatii (strain CaD3)).